The chain runs to 142 residues: Large ribosomal subunit protein uL13 (142 aa).

The protein belongs to the universal ribosomal protein uL13 family. In terms of assembly, part of the 50S ribosomal subunit.

Its function is as follows. This protein is one of the early assembly proteins of the 50S ribosomal subunit, although it is not seen to bind rRNA by itself. It is important during the early stages of 50S assembly. In Koribacter versatilis (strain Ellin345), this protein is Large ribosomal subunit protein uL13.